Here is a 171-residue protein sequence, read N- to C-terminus: Putative F-box protein At1g32020 (171 aa).

One can recognise an F-box domain in the interval 3 to 49 (CDRISTLPDHLVAKIVSYLGIKDSIKTSVLSKRWEFVWLKVVGLDLK).

This chain is Putative F-box protein At1g32020, found in Arabidopsis thaliana (Mouse-ear cress).